The primary structure comprises 151 residues: Large ribosomal subunit protein uL13 (151 aa).

The interval 126–151 (YPGPNHPHQAQKPEELTLNTIPNGDK) is disordered. Residues 142–151 (TLNTIPNGDK) show a composition bias toward polar residues.

The protein belongs to the universal ribosomal protein uL13 family. Part of the 50S ribosomal subunit.

Functionally, this protein is one of the early assembly proteins of the 50S ribosomal subunit, although it is not seen to bind rRNA by itself. It is important during the early stages of 50S assembly. This is Large ribosomal subunit protein uL13 from Crocosphaera subtropica (strain ATCC 51142 / BH68) (Cyanothece sp. (strain ATCC 51142)).